The primary structure comprises 402 residues: Beta-1,4-galactosyltransferase 1 (402 aa).

The Cytoplasmic segment spans residues methionine 1–arginine 24. A helical; Signal-anchor for type II membrane protein membrane pass occupies residues leucine 25 to glycine 44. The Lumenal segment spans residues arginine 45 to serine 402. A disordered region spans residues leucine 77–serine 130. N-linked (GlcNAc...) asparagine glycans are attached at residues asparagine 90 and asparagine 117. A compositionally biased stretch (polar residues) spans serine 116–serine 130. A disulfide bond links cysteine 134 and cysteine 176. UDP-alpha-D-galactose-binding positions include proline 187–arginine 191, phenylalanine 226–arginine 228, valine 253–aspartate 254, and tryptophan 314. The cysteines at positions 247 and 266 are disulfide-linked. Aspartate 254 is a binding site for Mn(2+). Residue glycine 316–aspartate 319 participates in N-acetyl-D-glucosamine binding. Residue histidine 347 participates in Mn(2+) binding. Histidine 347–arginine 349 is a UDP-alpha-D-galactose binding site. Arginine 359 is an N-acetyl-D-glucosamine binding site.

This sequence belongs to the glycosyltransferase 7 family. As to quaternary structure, homodimer; and heterodimer with alpha-lactalbumin to form lactose synthase. Interacts (via N-terminal cytoplasmic domain) with UBE2Q1 (via N-terminus); the interaction is direct. It depends on Mn(2+) as a cofactor. The soluble form derives from the membrane forms by proteolytic processing. In terms of tissue distribution, detected in milk (at protein level).

It is found in the golgi apparatus. The protein localises to the golgi stack membrane. The protein resides in the cell membrane. Its subcellular location is the cell surface. It localises to the cell projection. It is found in the filopodium. The protein localises to the secreted. It catalyses the reaction D-glucose + UDP-alpha-D-galactose = lactose + UDP + H(+). The catalysed reaction is an N-acetyl-beta-D-glucosaminyl derivative + UDP-alpha-D-galactose = a beta-D-galactosyl-(1-&gt;4)-N-acetyl-beta-D-glucosaminyl derivative + UDP + H(+). It carries out the reaction N-acetyl-D-glucosamine + UDP-alpha-D-galactose = beta-D-galactosyl-(1-&gt;4)-N-acetyl-D-glucosamine + UDP + H(+). The enzyme catalyses a beta-D-GlcNAc-(1-&gt;3)-beta-D-Gal-(1-&gt;4)-beta-D-Glc-(1&lt;-&gt;1)-Cer(d18:1(4E)) + UDP-alpha-D-galactose = a neolactoside nLc4Cer(d18:1(4E)) + UDP + H(+). It catalyses the reaction a beta-D-glucosylceramide + UDP-alpha-D-galactose = a beta-D-galactosyl-(1-&gt;4)-beta-D-glucosyl-(1&lt;-&gt;1)-ceramide + UDP + H(+). The catalysed reaction is a neolactoside IV(3)-beta-GlcNAc-nLc4Cer + UDP-alpha-D-galactose = a neolactoside nLc6Cer + UDP + H(+). The protein operates within protein modification; protein glycosylation. Functionally, the Golgi complex form catalyzes the production of lactose in the lactating mammary gland and could also be responsible for the synthesis of complex-type N-linked oligosaccharides in many glycoproteins as well as the carbohydrate moieties of glycolipids. Its function is as follows. The cell surface form functions as a recognition molecule during a variety of cell to cell and cell to matrix interactions, as those occurring during development and egg fertilization, by binding to specific oligosaccharide ligands on opposing cells or in the extracellular matrix. The secreted form is responsible for the synthesis of complex-type to N-linked oligosaccharides in many glycoproteins as well as the carbohydrate moieties of glycolipids. The protein is Beta-1,4-galactosyltransferase 1 (B4GALT1) of Bos taurus (Bovine).